A 71-amino-acid chain; its full sequence is Small ribosomal subunit protein bS21 (71 aa).

Belongs to the bacterial ribosomal protein bS21 family.

This chain is Small ribosomal subunit protein bS21, found in Hydrogenovibrio crunogenus (strain DSM 25203 / XCL-2) (Thiomicrospira crunogena).